The primary structure comprises 334 residues: MTKPIVFSGAQPSGELTIGNYMGALRQWVNMQDDYHCIYCIVDQHAITVRQDPQQLRKATLDTLALYLACGIDPQKSTIFVQSHVPEHAQLGWALNCYTYFGELSRMTQFKDKSARYAENINAGLFDYPVLMAADILLYQTNQVPVGEDQKQHLELSRDIAQRFNAIYGDIFKVPEPFIPKSGARVMSLLEPTKKMSKSDDNRNNVIGLLEDPKSVVKKIKRAVTDSDEPPVVRYDLKEKAGVSNLLDILSAVTGKTIPELEQHFEGKMYGHLKGEVAEAVSGMLIDLQERYHRFRNDEAFLNQVMKDGAEKASARASQTLKAVYEAIGFVAKP.

ATP contacts are provided by residues 11–13 and 19–20; these read QPS and GN. Residues 12 to 20 carry the 'HIGH' region motif; the sequence is PSGELTIGN. L-tryptophan is bound at residue Asp135. Residues 147-149, Val186, and 195-199 each bind ATP; these read GED and KMSKS. The short motif at 195–199 is the 'KMSKS' region element; it reads KMSKS.

It belongs to the class-I aminoacyl-tRNA synthetase family. Homodimer.

Its subcellular location is the cytoplasm. The catalysed reaction is tRNA(Trp) + L-tryptophan + ATP = L-tryptophyl-tRNA(Trp) + AMP + diphosphate + H(+). Functionally, catalyzes the attachment of tryptophan to tRNA(Trp). The polypeptide is Tryptophan--tRNA ligase (Klebsiella aerogenes (Enterobacter aerogenes)).